Here is a 116-residue protein sequence, read N- to C-terminus: Large ribosomal subunit protein uL18 (116 aa).

It belongs to the universal ribosomal protein uL18 family. In terms of assembly, part of the 50S ribosomal subunit; part of the 5S rRNA/L5/L18/L25 subcomplex. Contacts the 5S and 23S rRNAs.

This is one of the proteins that bind and probably mediate the attachment of the 5S RNA into the large ribosomal subunit, where it forms part of the central protuberance. The protein is Large ribosomal subunit protein uL18 of Pseudomonas syringae pv. tomato (strain ATCC BAA-871 / DC3000).